The primary structure comprises 163 residues: Cyanate hydratase (163 aa).

Residues arginine 103, glutamate 106, and serine 129 contribute to the active site.

The protein belongs to the cyanase family.

It carries out the reaction cyanate + hydrogencarbonate + 3 H(+) = NH4(+) + 2 CO2. Catalyzes the reaction of cyanate with bicarbonate to produce ammonia and carbon dioxide. This chain is Cyanate hydratase, found in Paracoccidioides lutzii (strain ATCC MYA-826 / Pb01) (Paracoccidioides brasiliensis).